The primary structure comprises 50 residues: Small ribosomal subunit protein uS14 (50 aa).

Residues cysteine 15, cysteine 18, cysteine 33, and cysteine 36 each coordinate Zn(2+).

It belongs to the universal ribosomal protein uS14 family. Zinc-binding uS14 subfamily. Part of the 30S ribosomal subunit. Zn(2+) serves as cofactor.

Binds 16S rRNA, required for the assembly of 30S particles. The sequence is that of Small ribosomal subunit protein uS14 from Methanosarcina barkeri (strain Fusaro / DSM 804).